A 902-amino-acid chain; its full sequence is Protein translocase subunit SecA (902 aa).

ATP contacts are provided by residues Gln85, 103–107 (GEGKT), and Asp492. Residues 846 to 902 (LSYSGGGEEPNQRPKSPRRRSERKIGPNEPCPCGSGKKFKKCHGRVGAPPLPTSQSQ) are disordered. Residues Cys876, Cys878, Cys887, and His888 each coordinate Zn(2+).

The protein belongs to the SecA family. Monomer and homodimer. Part of the essential Sec protein translocation apparatus which comprises SecA, SecYEG and auxiliary proteins SecDF. Other proteins may also be involved. Zn(2+) serves as cofactor.

Its subcellular location is the cell membrane. It is found in the cytoplasm. It carries out the reaction ATP + H2O + cellular proteinSide 1 = ADP + phosphate + cellular proteinSide 2.. Part of the Sec protein translocase complex. Interacts with the SecYEG preprotein conducting channel. Has a central role in coupling the hydrolysis of ATP to the transfer of proteins into and across the cell membrane, serving as an ATP-driven molecular motor driving the stepwise translocation of polypeptide chains across the membrane. The polypeptide is Protein translocase subunit SecA (Rubrobacter xylanophilus (strain DSM 9941 / JCM 11954 / NBRC 16129 / PRD-1)).